A 416-amino-acid chain; its full sequence is Tryptophan synthase beta chain (416 aa).

Position 98 is an N6-(pyridoxal phosphate)lysine (lysine 98).

The protein belongs to the TrpB family. Tetramer of two alpha and two beta chains. It depends on pyridoxal 5'-phosphate as a cofactor.

The enzyme catalyses (1S,2R)-1-C-(indol-3-yl)glycerol 3-phosphate + L-serine = D-glyceraldehyde 3-phosphate + L-tryptophan + H2O. The protein operates within amino-acid biosynthesis; L-tryptophan biosynthesis; L-tryptophan from chorismate: step 5/5. In terms of biological role, the beta subunit is responsible for the synthesis of L-tryptophan from indole and L-serine. The protein is Tryptophan synthase beta chain of Ruegeria pomeroyi (strain ATCC 700808 / DSM 15171 / DSS-3) (Silicibacter pomeroyi).